Reading from the N-terminus, the 492-residue chain is Probable malate:quinone oxidoreductase 1 (492 aa).

The protein belongs to the MQO family. It depends on FAD as a cofactor.

It carries out the reaction (S)-malate + a quinone = a quinol + oxaloacetate. It functions in the pathway carbohydrate metabolism; tricarboxylic acid cycle; oxaloacetate from (S)-malate (quinone route): step 1/1. This chain is Probable malate:quinone oxidoreductase 1, found in Staphylococcus epidermidis (strain ATCC 12228 / FDA PCI 1200).